We begin with the raw amino-acid sequence, 1047 residues long: Carbamoyl phosphate synthase large chain (1047 aa).

The carboxyphosphate synthetic domain stretch occupies residues 1 to 398; the sequence is MPRRDDIHRI…ALMKAIASLD (398 aa). ATP contacts are provided by R129, R169, G175, G176, E208, L210, E215, G241, V242, H243, Q284, and E296. The region spanning 133 to 325 is the ATP-grasp 1 domain; that stretch reads YEFLKAMGEP…IARIAAKIAA (193 aa). Positions 284, 296, and 298 each coordinate Mg(2+). Positions 284, 296, and 298 each coordinate Mn(2+). Positions 399–539 are oligomerization domain; sequence NAFSSNIRLH…YSTYEDEDET (141 aa). A carbamoyl phosphate synthetic domain region spans residues 540-916; that stretch reads PDLSGSIMII…ALRKSLQRSI (377 aa). Residues 665 to 854 form the ATP-grasp 2 domain; it reads SRVIEGLGIK…WVRLAVECMI (190 aa). Positions 701, 738, 740, 745, 770, 771, 772, 773, 813, and 825 each coordinate ATP. The Mg(2+) site is built by Q813, E825, and N827. The Mn(2+) site is built by Q813, E825, and N827. An MGS-like domain is found at 910 to 1047; sequence KSLQRSISSV…REIGDYLQVS (138 aa). The interval 916–1047 is allosteric domain; the sequence is ISSVLITVRD…REIGDYLQVS (132 aa).

The protein belongs to the CarB family. Composed of two chains; the small (or glutamine) chain promotes the hydrolysis of glutamine to ammonia, which is used by the large (or ammonia) chain to synthesize carbamoyl phosphate. Tetramer of heterodimers (alpha,beta)4. It depends on Mg(2+) as a cofactor. Mn(2+) is required as a cofactor.

It carries out the reaction hydrogencarbonate + L-glutamine + 2 ATP + H2O = carbamoyl phosphate + L-glutamate + 2 ADP + phosphate + 2 H(+). The enzyme catalyses hydrogencarbonate + NH4(+) + 2 ATP = carbamoyl phosphate + 2 ADP + phosphate + 2 H(+). Its pathway is amino-acid biosynthesis; L-arginine biosynthesis; carbamoyl phosphate from bicarbonate: step 1/1. The protein operates within pyrimidine metabolism; UMP biosynthesis via de novo pathway; (S)-dihydroorotate from bicarbonate: step 1/3. Functionally, large subunit of the glutamine-dependent carbamoyl phosphate synthetase (CPSase). CPSase catalyzes the formation of carbamoyl phosphate from the ammonia moiety of glutamine, carbonate, and phosphate donated by ATP, constituting the first step of 2 biosynthetic pathways, one leading to arginine and/or urea and the other to pyrimidine nucleotides. The large subunit (synthetase) binds the substrates ammonia (free or transferred from glutamine from the small subunit), hydrogencarbonate and ATP and carries out an ATP-coupled ligase reaction, activating hydrogencarbonate by forming carboxy phosphate which reacts with ammonia to form carbamoyl phosphate. The protein is Carbamoyl phosphate synthase large chain of Thermoplasma acidophilum (strain ATCC 25905 / DSM 1728 / JCM 9062 / NBRC 15155 / AMRC-C165).